Consider the following 303-residue polypeptide: Y-box-binding protein 1 (303 aa).

The span at 1–12 (MSSEVETQQQQP) shows a compositional bias: polar residues. The interval 1 to 28 (MSSEVETQQQQPDALEGKAGQEPAATVG) is disordered. Residues 39–103 (GTVKWFNVRN…GEKGAEAANV (65 aa)) enclose the CSD domain. Residues 43-48 (WFNVRN) form a C5-methylcytosine binding region. Residues 98–303 (AEAANVTGPE…TPEAEQGGAE (206 aa)) form a disordered region. Residues 122–132 (HYRRYPRRRGP) show a composition bias toward basic residues. 2 stretches are compositionally biased toward low complexity: residues 133–143 (PRNYQQNYQNN) and 173–187 (PPYY…RPQY). Basic residues-rich tracts occupy residues 220-229 (FRPRFRRGPP) and 258-270 (RRYR…RRRR). Positions 271 to 284 (PENPKSQDGKETKA) are enriched in basic and acidic residues.

Belongs to the YBX1 family.

The protein localises to the cytoplasm. Its subcellular location is the nucleus. It localises to the cytoplasmic granule. The protein resides in the secreted. It is found in the extracellular exosome. The protein localises to the P-body. In terms of biological role, DNA- and RNA-binding protein involved in various processes, such as translational repression, RNA stabilization, mRNA splicing and transcription regulation. Binds preferentially to the 5'-[CU]CUGCG-3' RNA motif and specifically recognizes mRNA transcripts modified by C5-methylcytosine (m5C). Promotes mRNA stabilization: acts by binding to m5C-containing mRNAs and preventing mRNA decay. Plays a role in the maternal-to-zygotic transition in early embryo by binding to m5C-containing maternal mRNAs and preventing their degradation. Also promotes maternal-to-zygotic transition in oocytes and embryos by promoting translation repression; molecular mechanisms governing translation repression are unknown. Plays a key role in RNA composition of extracellular exosomes by defining the sorting of small non-coding RNAs, such as tRNAs, Y RNAs, Vault RNAs and miRNAs. Probably sorts RNAs in exosomes by recognizing and binding C5-methylcytosine (m5C)-containing RNAs. Acts as a key effector of epidermal progenitors by preventing epidermal progenitor senescence: acts by regulating the translation of a senescence-associated subset of cytokine mRNAs, possibly by binding to m5C-containing mRNAs. Also involved in pre-mRNA alternative splicing regulation: binds to splice sites in pre-mRNA and regulates splice site selection. Also able to bind DNA and regulate transcription. Binds to promoters that contain a Y-box (5'-CTGATTGGCCAA-3'). Promotes separation of DNA strands that contain mismatches or are modified by cisplatin. Has endonucleolytic activity and can introduce nicks or breaks into double-stranded DNA, suggesting a role in DNA repair. The secreted form acts as an extracellular mitogen and stimulates cell migration and proliferation. This is Y-box-binding protein 1 from Xenopus laevis (African clawed frog).